A 202-amino-acid chain; its full sequence is Adenylyl-sulfate kinase (202 aa).

Residue 31 to 38 (GLSASGKS) participates in ATP binding. The active-site Phosphoserine intermediate is the serine 105.

The protein belongs to the APS kinase family.

It catalyses the reaction adenosine 5'-phosphosulfate + ATP = 3'-phosphoadenylyl sulfate + ADP + H(+). The protein operates within sulfur metabolism; hydrogen sulfide biosynthesis; sulfite from sulfate: step 2/3. Catalyzes the synthesis of activated sulfate. The chain is Adenylyl-sulfate kinase (MET14) from Saccharomyces bayanus (Yeast).